The primary structure comprises 355 residues: Chorismate synthase (355 aa).

Arg46 contacts NADP(+). Residues 123–125, 233–234, Gly273, 288–292, and Arg314 each bind FMN; these read RAS, NG, and KPTPS.

Belongs to the chorismate synthase family. As to quaternary structure, homotetramer. Requires FMNH2 as cofactor.

It catalyses the reaction 5-O-(1-carboxyvinyl)-3-phosphoshikimate = chorismate + phosphate. It functions in the pathway metabolic intermediate biosynthesis; chorismate biosynthesis; chorismate from D-erythrose 4-phosphate and phosphoenolpyruvate: step 7/7. Functionally, catalyzes the anti-1,4-elimination of the C-3 phosphate and the C-6 proR hydrogen from 5-enolpyruvylshikimate-3-phosphate (EPSP) to yield chorismate, which is the branch point compound that serves as the starting substrate for the three terminal pathways of aromatic amino acid biosynthesis. This reaction introduces a second double bond into the aromatic ring system. This is Chorismate synthase from Campylobacter concisus (strain 13826).